A 62-amino-acid chain; its full sequence is Large ribosomal subunit protein eL24 (62 aa).

The Zn(2+) site is built by Cys-6, Cys-9, Cys-32, and Cys-36. The C4-type zinc finger occupies 6–36; it reads CSFCEGKIEPGCGKKYVKKDGSVMQFCSSKC.

Belongs to the eukaryotic ribosomal protein eL24 family. Part of the 50S ribosomal subunit. Forms a cluster with proteins L3 and L14. Zn(2+) serves as cofactor.

In terms of biological role, binds to the 23S rRNA. The protein is Large ribosomal subunit protein eL24 of Methanococcus vannielii (strain ATCC 35089 / DSM 1224 / JCM 13029 / OCM 148 / SB).